Consider the following 440-residue polypeptide: MTFLPQEFIRKVRDRAPLDTADVARFVQGVTAGDVTEGQIAAFAMAVYFNELPLSARIALTLAQRDSGDVLDWRGARLNGPVVDKHSTGGVGDLTSLVIGPMVAACGGYVPMISGRGLGHTGGTLDKLEAIPGYDVAPSVDMLRRVVRDAGLAIVGQTAQLAPADKRIYAVRDVTATVESISLITASILSKKLAAGVGALAMDVKVGSGAFMPSAEQSAELARSIVDVGNGAGMRTAATLTDMNQALAPCAGNAIEVRCAIDFLTGAARPARLEAVSFALAAQMLTMGGLAADAHDARRRLRAVLESGAAAERFARMVAALGGPADLVERPERHLPRAAAAAPVAAARAGWIERIDARALGLAVVGLGGGRAKIGDTLDYSVGLSALAELGERVEAGQPLATVHARDADSAAQATDAVRRAYRIGAEPPAQTRVVHAVIE.

Belongs to the thymidine/pyrimidine-nucleoside phosphorylase family. Homodimer.

The enzyme catalyses thymidine + phosphate = 2-deoxy-alpha-D-ribose 1-phosphate + thymine. The protein operates within pyrimidine metabolism; dTMP biosynthesis via salvage pathway; dTMP from thymine: step 1/2. In terms of biological role, the enzymes which catalyze the reversible phosphorolysis of pyrimidine nucleosides are involved in the degradation of these compounds and in their utilization as carbon and energy sources, or in the rescue of pyrimidine bases for nucleotide synthesis. The polypeptide is Thymidine phosphorylase (Burkholderia pseudomallei (strain K96243)).